A 138-amino-acid polypeptide reads, in one-letter code: Cellular retinoic acid-binding protein 2 (138 aa).

The Nuclear localization signal signature appears at 21–31; that stretch reads KALGVNMMMRK. Lys102 participates in a covalent cross-link: Glycyl lysine isopeptide (Lys-Gly) (interchain with G-Cter in SUMO). Position 133 to 135 (133 to 135) interacts with all-trans-retinoate; that stretch reads RVY.

The protein belongs to the calycin superfamily. Fatty-acid binding protein (FABP) family. In terms of assembly, interacts with importin alpha. Interacts with RXR and RARA. Post-translationally, sumoylated in response to retinoic acid binding, sumoylation is critical for dissociation from ER and subsequent nuclear translocation. In terms of tissue distribution, embryo and skin of adult mouse.

It localises to the cytoplasm. The protein localises to the endoplasmic reticulum. It is found in the nucleus. In terms of biological role, transports retinoic acid to the nucleus. Regulates the access of retinoic acid to the nuclear retinoic acid receptors. The sequence is that of Cellular retinoic acid-binding protein 2 (Crabp2) from Mus musculus (Mouse).